The sequence spans 215 residues: Nucleoside triphosphate pyrophosphatase (215 aa).

D77 serves as the catalytic Proton acceptor.

Belongs to the Maf family. A divalent metal cation serves as cofactor.

Its subcellular location is the cytoplasm. It catalyses the reaction a ribonucleoside 5'-triphosphate + H2O = a ribonucleoside 5'-phosphate + diphosphate + H(+). It carries out the reaction a 2'-deoxyribonucleoside 5'-triphosphate + H2O = a 2'-deoxyribonucleoside 5'-phosphate + diphosphate + H(+). In terms of biological role, nucleoside triphosphate pyrophosphatase. May have a dual role in cell division arrest and in preventing the incorporation of modified nucleotides into cellular nucleic acids. In Rickettsia peacockii (strain Rustic), this protein is Nucleoside triphosphate pyrophosphatase.